The following is a 489-amino-acid chain: Rhamnulokinase (489 aa).

ATP is bound at residue 13 to 17 (ASSGR). Cysteine 68 and cysteine 222 are disulfide-bonded. Residues glycine 83 and 236–238 (HDT) each bind substrate. Aspartate 237 (proton acceptor) is an active-site residue. ATP is bound at residue threonine 259. Asparagine 296 is a substrate binding site. Glutamine 304 serves as a coordination point for ATP. Cysteine 353 and cysteine 370 are joined by a disulfide. Glycine 402 contributes to the ATP binding site. Cysteine 413 and cysteine 417 are joined by a disulfide.

It belongs to the rhamnulokinase family. In terms of assembly, monomer. Requires Mg(2+) as cofactor.

The enzyme catalyses L-rhamnulose + ATP = L-rhamnulose 1-phosphate + ADP + H(+). It functions in the pathway carbohydrate degradation; L-rhamnose degradation; glycerone phosphate from L-rhamnose: step 2/3. Functionally, involved in the catabolism of L-rhamnose (6-deoxy-L-mannose). Catalyzes the transfer of the gamma-phosphate group from ATP to the 1-hydroxyl group of L-rhamnulose to yield L-rhamnulose 1-phosphate. The polypeptide is Rhamnulokinase (Escherichia coli O9:H4 (strain HS)).